The primary structure comprises 311 residues: Putative HTH-type transcriptional regulatory protein MTH_967 (311 aa).

An HTH cro/C1-type domain is found at 134 to 192 (LREVREEYNLSLKDLADLAHVSRKTIYKYENGLARASAETAMILEEILNIRITLSIDIF). Positions 145-164 (LKDLADLAHVSRKTIYKYEN) form a DNA-binding region, H-T-H motif.

The protein is Putative HTH-type transcriptional regulatory protein MTH_967 of Methanothermobacter thermautotrophicus (strain ATCC 29096 / DSM 1053 / JCM 10044 / NBRC 100330 / Delta H) (Methanobacterium thermoautotrophicum).